Here is a 510-residue protein sequence, read N- to C-terminus: ATP synthase subunit alpha (510 aa).

Position 169–176 (169–176) interacts with ATP; that stretch reads GDRQTGKT.

The protein belongs to the ATPase alpha/beta chains family. In terms of assembly, F-type ATPases have 2 components, CF(1) - the catalytic core - and CF(0) - the membrane proton channel. CF(1) has five subunits: alpha(3), beta(3), gamma(1), delta(1), epsilon(1). CF(0) has three main subunits: a(1), b(2) and c(9-12). The alpha and beta chains form an alternating ring which encloses part of the gamma chain. CF(1) is attached to CF(0) by a central stalk formed by the gamma and epsilon chains, while a peripheral stalk is formed by the delta and b chains.

The protein resides in the cell membrane. It catalyses the reaction ATP + H2O + 4 H(+)(in) = ADP + phosphate + 5 H(+)(out). Functionally, produces ATP from ADP in the presence of a proton gradient across the membrane. The alpha chain is a regulatory subunit. In Thermomicrobium roseum (strain ATCC 27502 / DSM 5159 / P-2), this protein is ATP synthase subunit alpha.